The primary structure comprises 45 residues: Photosystem II reaction center protein K (45 aa).

Residues 1 to 8 (MEAALLLA) constitute a propeptide that is removed on maturation. The helical transmembrane segment at 24–44 (LPIIPLFFLALAFVWQAAVGF) threads the bilayer.

Belongs to the PsbK family. PSII is composed of 1 copy each of membrane proteins PsbA, PsbB, PsbC, PsbD, PsbE, PsbF, PsbH, PsbI, PsbJ, PsbK, PsbL, PsbM, PsbT, PsbX, PsbY, PsbZ, Psb30/Ycf12, peripheral proteins PsbO, CyanoQ (PsbQ), PsbU, PsbV and a large number of cofactors. It forms dimeric complexes.

It localises to the cellular thylakoid membrane. One of the components of the core complex of photosystem II (PSII). PSII is a light-driven water:plastoquinone oxidoreductase that uses light energy to abstract electrons from H(2)O, generating O(2) and a proton gradient subsequently used for ATP formation. It consists of a core antenna complex that captures photons, and an electron transfer chain that converts photonic excitation into a charge separation. The sequence is that of Photosystem II reaction center protein K from Rippkaea orientalis (strain PCC 8801 / RF-1) (Cyanothece sp. (strain PCC 8801)).